The primary structure comprises 320 residues: BTB and MATH domain-containing protein 36 (320 aa).

Residues 7–136 (KGSIRFEIQN…DKHAVLEVQI (130 aa)) enclose the MATH domain. Positions 160–227 (TDVVLVLEGK…IYPTHMLINS (68 aa)) constitute a BTB domain.

The protein is BTB and MATH domain-containing protein 36 (bath-36) of Caenorhabditis elegans.